Here is a 246-residue protein sequence, read N- to C-terminus: Trypsin V-B (246 aa).

A signal peptide spans M1–A15. Residues F16–R24 constitute a propeptide, activation peptide. The region spanning I25–A244 is the Peptidase S1 domain. 6 disulfide bridges follow: C31–C160, C49–C65, C133–C233, C140–C206, C171–C185, and C196–C220. H64 (charge relay system) is an active-site residue. Positions 76, 78, and 86 each coordinate Ca(2+). The Charge relay system role is filled by D108. S200 serves as the catalytic Charge relay system.

The protein belongs to the peptidase S1 family. It depends on Ca(2+) as a cofactor.

Its subcellular location is the secreted. It is found in the extracellular space. The catalysed reaction is Preferential cleavage: Arg-|-Xaa, Lys-|-Xaa.. This chain is Trypsin V-B, found in Rattus norvegicus (Rat).